Here is a 588-residue protein sequence, read N- to C-terminus: Calcium/calmodulin-dependent protein kinase kinase 2 (588 aa).

Residues 1-11 (MSSCVSSQPTS) show a composition bias toward polar residues. Disordered stretches follow at residues 1-34 (MSSC…KPCE) and 64-147 (DLNL…PTVE). Serine 2 bears the N-acetylserine mark. 5 positions are modified to phosphoserine: serine 99, serine 114, serine 129, serine 133, and serine 137. Residues 101–116 (QEPSQGGPASSSNSLD) show a composition bias toward polar residues. The segment covering 124 to 139 (PSLSYSPASSPQSSPR) has biased composition (low complexity). One can recognise a Protein kinase domain in the interval 165-446 (YTLKDEIGKG…VPEIKLHPWV (282 aa)). ATP contacts are provided by residues 171–179 (IGKGSYGVV) and lysine 194. The interval 204 to 226 (QAGFPRRPPPRGARPAPGGCIQP) is RP domain. Residues 205 to 225 (AGFPRRPPPRGARPAPGGCIQ) form a disordered region. The active-site Proton acceptor is the aspartate 312. Positions 472–477 (ENSVKH) are autoinhibitory domain. The segment at 475–500 (VKHIPSLATVILVKTMIRKRSFGNPF) is calmodulin-binding. Serine 495, serine 511, threonine 522, and serine 572 each carry phosphoserine. A disordered region spans residues 497-588 (GNPFEGSRRE…LQPEEVMEPE (92 aa)). Over residues 521–536 (PTREWEPLSEPKEARQ) the composition is skewed to basic and acidic residues. The segment covering 570–580 (PGSPPRMPPLQ) has biased composition (pro residues).

The protein belongs to the protein kinase superfamily. Ser/Thr protein kinase family. As to quaternary structure, interacts with calmodulin. In terms of processing, autophosphorylated and phosphorylated by PKA. Each isoform may show a different pattern of phosphorylation. In terms of tissue distribution, expressed in all tissues tested. A differential expression pattern compared to CAMKK1 is observed in the brain.

The protein resides in the nucleus. It localises to the cytoplasm. The protein localises to the cell projection. It is found in the neuron projection. The enzyme catalyses L-seryl-[protein] + ATP = O-phospho-L-seryl-[protein] + ADP + H(+). The catalysed reaction is L-threonyl-[protein] + ATP = O-phospho-L-threonyl-[protein] + ADP + H(+). Activated by Ca(2+)/calmodulin. Binding of calmodulin may relieve intrasteric autoinhibition. Autophosphorylation does not alter activity or regulation by Ca(2+)/calmodulin. In part, activity is independent on Ca(2+)/calmodulin. Its function is as follows. Calcium/calmodulin-dependent protein kinase belonging to a proposed calcium-triggered signaling cascade involved in a number of cellular processes. Phosphorylates CAMK1, CAMK4 and CAMK1D. Efficiently phosphorylates 5'-AMP-activated protein kinase (AMPK) trimer, including that consisting of PRKAA1, PRKAB1 and PRKAG1. This phosphorylation is stimulated in response to Ca(2+) signals. May play a role in neurite growth. Isoform 2 may promote neurite elongation, while isoform 1 may promoter neurite branching. May be involved in hippocampal activation of CREB1. This Mus musculus (Mouse) protein is Calcium/calmodulin-dependent protein kinase kinase 2 (Camkk2).